The sequence spans 102 residues: Small ribosomal subunit protein uS10 (102 aa).

The protein belongs to the universal ribosomal protein uS10 family. In terms of assembly, part of the 30S ribosomal subunit.

Functionally, involved in the binding of tRNA to the ribosomes. In Finegoldia magna (strain ATCC 29328 / DSM 20472 / WAL 2508) (Peptostreptococcus magnus), this protein is Small ribosomal subunit protein uS10.